Reading from the N-terminus, the 72-residue chain is Translation initiation factor IF-1 (72 aa).

The S1-like domain occupies 1–72 (MAKEDNIEMQ…SKGRIVFRSR (72 aa)).

It belongs to the IF-1 family. As to quaternary structure, component of the 30S ribosomal translation pre-initiation complex which assembles on the 30S ribosome in the order IF-2 and IF-3, IF-1 and N-formylmethionyl-tRNA(fMet); mRNA recruitment can occur at any time during PIC assembly.

The protein localises to the cytoplasm. Its function is as follows. One of the essential components for the initiation of protein synthesis. Stabilizes the binding of IF-2 and IF-3 on the 30S subunit to which N-formylmethionyl-tRNA(fMet) subsequently binds. Helps modulate mRNA selection, yielding the 30S pre-initiation complex (PIC). Upon addition of the 50S ribosomal subunit IF-1, IF-2 and IF-3 are released leaving the mature 70S translation initiation complex. The chain is Translation initiation factor IF-1 from Klebsiella pneumoniae subsp. pneumoniae (strain ATCC 700721 / MGH 78578).